The primary structure comprises 688 residues: NADH-ubiquinone oxidoreductase 75 kDa subunit (688 aa).

Positions 1–85 constitute a 2Fe-2S ferredoxin-type domain; sequence MIIRFKINEI…DESIETEIDE (85 aa). 4 residues coordinate [2Fe-2S] cluster: Cys-38, Cys-49, Cys-52, and Cys-66. In terms of domain architecture, 4Fe-4S His(Cys)3-ligated-type spans 85-124; it reads EILKAREGVMEFLLINHPLDCPICDQGGECDLQEQTLAYG. Residues His-101, Cys-105, Cys-108, Cys-114, Cys-153, Cys-156, Cys-159, and Cys-204 each contribute to the [4Fe-4S] cluster site. The region spanning 223-279 is the 4Fe-4S Mo/W bis-MGD-type domain; it reads LKNIKGIDIFDTLLTPINYQVKGGEIFRILPRINDRINEEWITDKVRFHYESYKIIE.

This sequence belongs to the complex I 75 kDa subunit family. In terms of assembly, complex I is composed of about 45 different subunits. It depends on [2Fe-2S] cluster as a cofactor. [4Fe-4S] cluster is required as a cofactor.

It is found in the mitochondrion inner membrane. It catalyses the reaction a ubiquinone + NADH + 5 H(+)(in) = a ubiquinol + NAD(+) + 4 H(+)(out). Functionally, core subunit of the mitochondrial membrane respiratory chain NADH dehydrogenase (Complex I) that is believed to belong to the minimal assembly required for catalysis. Complex I functions in the transfer of electrons from NADH to the respiratory chain. The immediate electron acceptor for the enzyme is believed to be ubiquinone. This is the largest subunit of complex I and it is a component of the iron-sulfur (IP) fragment of the enzyme. It may form part of the active site crevice where NADH is oxidized. The protein is NADH-ubiquinone oxidoreductase 75 kDa subunit (nad11) of Dictyostelium discoideum (Social amoeba).